Here is an 88-residue protein sequence, read N- to C-terminus: Small ribosomal subunit protein bS16 (88 aa).

This sequence belongs to the bacterial ribosomal protein bS16 family.

The protein is Small ribosomal subunit protein bS16 of Anaeromyxobacter dehalogenans (strain 2CP-1 / ATCC BAA-258).